Reading from the N-terminus, the 435-residue chain is uncharacterized protein (435 aa).

The next 12 membrane-spanning stretches (helical) occupy residues 14-34 (VSMAVGVMIGASIFSIFGVGA), 44-64 (TFILSGIYALLVAYSYTKLGA), 84-104 (IITGALSILLWMSYVISIALF), 123-143 (FNIAITEIGIVAFFTALNFFG), 153-173 (FIVLVKLLILGLFIFAGLITI), 187-207 (VSGMIFASAIFFLSYMGFGVI), 224-244 (AIFISILIVMFVYVGVAISAI), 267-287 (FLGNLGFLLISIGALFSISSA), 324-344 (LYITSALGVLFALLFNMEGVA), 346-366 (ITSAVFMVIYLFVILSHYILI), 375-395 (IVIFSFIVVLGVFLLLLYYQW), and 400-420 (FVFYGIIATFIGVLIFEIIYR).

It localises to the cell membrane. This is an uncharacterized protein from Methanocaldococcus jannaschii (strain ATCC 43067 / DSM 2661 / JAL-1 / JCM 10045 / NBRC 100440) (Methanococcus jannaschii).